The sequence spans 703 residues: MQSIDLRLPSTSANHSISESLEHSKSELNELSNVSESESYFDITKKLHALSTVVQRQQREIDNQKRDLCTKTKHIEELQTLLSNANIMSDGASSQNDAFAHNPSTSVSVELVRPVVGTKKHAVYATSAPKSMSLQDSLSVPSATALADVSSSLNYSRKLSSNSIKSTNAPVFGTAVKNVTGENILSASSSEENLNSNRNGDPKFRFSVSPWISSSNFNPYEASLANFQSDNCKLKSHNSLPSIRTNVRYSNSKPSTPLSPEDVDLGTYTVKNRDSWSNEVNLSASTNNLSTNTSGTLKPYSLSSSRSSSYSKGVNSAASLQSIWETMNNSNPSVIPESTSSREPAARYRKISERNAVYDWNVIIDKIIVSNDQQSSIFLQQKLKISSYDMKQNIVDSIISQIHPLMLNRFGNFLVQRCFEHGTAPQIRQMGSAMLGNMLKLATDPFGCHVVQKAIDNVTEDIKLAMMDELFLTIDVTIMHHYACHVWQKLFETQWYEYPVNVMNRVNNALRGKWHEVAVGENGSLVVQNMFENCVEKDKRECIEEIIFHLDGIARGQWGNWVVQHMVENGQGEDLKRVIDALLNRAVEFSIDQFASKVIEKAIKSGPKNFISLYLKQITNARVDRTRQPLIDIASDQYGNYLIQQIIQLGQPAEKNLVITHIKKHMVSLRGSKYGQKVAYLVEKWNSQKQVSSVINYNCNTDL.

Polar residues-rich tracts occupy residues 1-19 (MQSI…SISE) and 245-258 (TNVR…STPL). Disordered stretches follow at residues 1–29 (MQSI…SELN), 245–265 (TNVR…DVDL), and 284–309 (ASTN…RSSS). The PUM-HD domain maps to 331-686 (NPSVIPESTS…KVAYLVEKWN (356 aa)). 8 Pumilio repeats span residues 361–396 (NVII…NIVD), 397–432 (SIIS…QMGS), 433–468 (AMLG…AMMD), 469–504 (ELFL…NVMN), 509–544 (ALRG…ECIE), 545–580 (EIIF…RVID), 581–616 (ALLN…LYLK), and 625–660 (RTRQ…LVIT).

This chain is Meiotic coiled-coil protein 2 (mcp2), found in Schizosaccharomyces pombe (strain 972 / ATCC 24843) (Fission yeast).